A 182-amino-acid chain; its full sequence is Large ribosomal subunit protein uL5 (182 aa).

The protein belongs to the universal ribosomal protein uL5 family. Part of the 50S ribosomal subunit; part of the 5S rRNA/L5/L18/L25 subcomplex. Contacts the 5S rRNA and the P site tRNA. Forms a bridge to the 30S subunit in the 70S ribosome.

Its function is as follows. This is one of the proteins that bind and probably mediate the attachment of the 5S RNA into the large ribosomal subunit, where it forms part of the central protuberance. In the 70S ribosome it contacts protein S13 of the 30S subunit (bridge B1b), connecting the 2 subunits; this bridge is implicated in subunit movement. Contacts the P site tRNA; the 5S rRNA and some of its associated proteins might help stabilize positioning of ribosome-bound tRNAs. This chain is Large ribosomal subunit protein uL5, found in Thermosipho melanesiensis (strain DSM 12029 / CIP 104789 / BI429).